Reading from the N-terminus, the 793-residue chain is MNDFSFEDKGLISRSGFGSRHVRRVVKALALIFSLLILYLTISNVSDSPPKRDSLSLDDIVLQKYKPSYKQVNWIDSQGLKDTFLVKYGDLINIQDPYNLNKTLFSVSDLVYNGIQLDYDSYSISFDAKYVLVSVNKSQRWRHSSFAQYYLYNTETKDVNMLGQDNEHWTISLAEWSPTGHQLSFVYNNDLYVRKNDGNVQRLTYDGTVDVFNGLTDWIYEEEVLSSPSTIWWSPDSDKIAFLKLNESEIPTYHYPLYTAELDPSLPEFDYNKDMAIKYPKPGNPNPSVSLFVADLNSNASSNFSLWHNEPLAEPVVQNVLWVNTSSVLVQFTNRNSTCITARLLDTELKSIHTVKTECLEEGWYEVQQSAKMFPLNNSLVWENWSDGYFDILALDDYNHLAFIPFNGSSPIYLTSGAWDVTDGPIHIDGDFGNVYFLATLKDSTERHLYYVSLDTLEIYGITDNGEDEGYYSTSFSPFGDFYVLNYHGPDVPWQELRSTKDKDYCLSLETNSRLKQQLSSITLPSVEYGKLTFNDTTFNFMERRPRNFDVNKKYPVLFFAYGGPGSQQVAKLFRVDFQAYLASHPDFEFIVVTLDGRGTGFNGNAFRYSVSRHLGEWESYDQGQAGKFWADLPFVDENHVGIWGWSYGGYLTLKTLETQDVFSYGMAVAPVTDWRLYDSVYTERYMDLPQYNKEGYKNSQIHDYEKFKQLKRFFVAHGTGDDNVHFQHSMHLMDGLNLANCYNYDMAVFPDSAHSISYHNASLSIYHRLSEWIGDALGRIDPSTGVRQHRWD.

The Cytoplasmic portion of the chain corresponds to 1 to 24 (MNDFSFEDKGLISRSGFGSRHVRR). Residues 25 to 45 (VVKALALIFSLLILYLTISNV) form a helical; Signal-anchor for type II membrane protein membrane-spanning segment. Over 46 to 793 (SDSPPKRDSL…STGVRQHRWD (748 aa)) the chain is Lumenal. 11 N-linked (GlcNAc...) asparagine glycosylation sites follow: N101, N136, N246, N299, N303, N324, N336, N377, N384, N407, and N535. Catalysis depends on charge relay system residues S647, D722, and H755. Residue N761 is glycosylated (N-linked (GlcNAc...) asparagine).

This sequence belongs to the peptidase S9B family.

The protein resides in the vacuole membrane. The sequence is that of Putative dipeptidyl aminopeptidase C2E11.08 from Schizosaccharomyces pombe (strain 972 / ATCC 24843) (Fission yeast).